The primary structure comprises 237 residues: Small ribosomal subunit protein uS2c (237 aa).

The protein belongs to the universal ribosomal protein uS2 family.

Its subcellular location is the plastid. This chain is Small ribosomal subunit protein uS2c (rps2), found in Epifagus virginiana (Beechdrops).